Here is a 776-residue protein sequence, read N- to C-terminus: Intermediate filament protein ifp-1 (776 aa).

Residues 1-23 (MDSANARDCLLHLARAKLSERQD) form a head region. The IF rod domain occupies 20–371 (ERQDLVQLND…ELLDRSGDPR (352 aa)). A coil 1A region spans residues 24-55 (LVQLNDQFVDIIEHVHYMEAEHTALEHDYNLL). Positions 56–69 (KSGVQSDSSGINEI) are linker 1. The tract at residues 70–207 (YNVEIRTVRS…EDNKKIIMNE (138 aa)) is coil 1B. A linker 12 region spans residues 208–224 (HKYFVRDRNADRHVFRD). Residues 225-620 (QLRKAIADIR…QRGPHHSSYH (396 aa)) form a coil 2 region. 2 disordered regions span residues 453-473 (ASPIRPSYTPYQQESRADSRS) and 518-544 (NTTQINNPYASRTPTSSVNDRIASERR). Positions 518 to 536 (NTTQINNPYASRTPTSSVN) are enriched in polar residues. Residues 621 to 768 (AATGSVSNSI…WFVYTSNTEI (148 aa)) form a tail region. The 112-residue stretch at 653-764 (NFQRFTRWYK…EVKSWFVYTS (112 aa)) folds into the LTD domain.

Belongs to the intermediate filament family.

Its subcellular location is the cytoplasm. Functionally, cytoplasmic intermediate filaments provide mechanical strength to cells. Not essential protein. In Caenorhabditis elegans, this protein is Intermediate filament protein ifp-1 (ifp-1).